The primary structure comprises 349 residues: tRNA pseudouridine synthase D (349 aa).

Residue Phe-27 coordinates substrate. Asp-80 (nucleophile) is an active-site residue. Asn-129 contacts substrate. Positions 155-303 constitute a TRUD domain; the sequence is GVPNYFGAQR…VEAARRAMLL (149 aa). Substrate is bound at residue Phe-329.

It belongs to the pseudouridine synthase TruD family.

The catalysed reaction is uridine(13) in tRNA = pseudouridine(13) in tRNA. Functionally, responsible for synthesis of pseudouridine from uracil-13 in transfer RNAs. This is tRNA pseudouridine synthase D from Escherichia coli O17:K52:H18 (strain UMN026 / ExPEC).